We begin with the raw amino-acid sequence, 217 residues long: GRB2-related adapter protein (217 aa).

The SH3 1 domain occupies 1 to 58 (MESVALYSFQATESDELAFNKGDTLKILNMEDDQNWYKAELRGAEGFVPKNYIRLKPH). Positions 60–152 (WYSGRISRQL…KRQVFLQDEE (93 aa)) constitute an SH2 domain. The 60-residue stretch at 158 to 217 (PRACFAQAQFDFSAQDPSQLSFRRGDIIEVLERLDPSWWRGRLSGRIGFFPRSYVQPVHM) folds into the SH3 2 domain.

The protein belongs to the GRB2/sem-5/DRK family. In terms of assembly, associates through its SH2 domain with ligand-activated receptors for stem cell factor (KIT) and erythropoietin (EPOR). Also forms a stable complex with the Bcr-Abl oncoprotein. GRAP is associated with the Ras guanine nucleotide exchange factor SOS1, primarily through its N-terminal SH3 domain. Interacts with phosphorylated LAT upon TCR activation. Interacts with SHB.

The protein resides in the membrane. It localises to the synapse. Functionally, couples signals from receptor and cytoplasmic tyrosine kinases to the Ras signaling pathway. Plays a role in the inner ear and in hearing. The polypeptide is GRB2-related adapter protein (GRAP) (Bos taurus (Bovine)).